A 324-amino-acid chain; its full sequence is Probable cell division protein WhiA (324 aa).

The H-T-H motif DNA-binding region spans 276–310; that stretch reads TLKELGEMMQGGKVSKSGINHRLRKIDEFADKLRN.

Belongs to the WhiA family.

Its function is as follows. Involved in cell division and chromosome segregation. In Shouchella clausii (strain KSM-K16) (Alkalihalobacillus clausii), this protein is Probable cell division protein WhiA.